A 246-amino-acid chain; its full sequence is tRNA (guanine-N(1)-)-methyltransferase (246 aa).

S-adenosyl-L-methionine is bound by residues G114 and 134–139 (IGDYIL).

Belongs to the RNA methyltransferase TrmD family. Homodimer.

The protein resides in the cytoplasm. The enzyme catalyses guanosine(37) in tRNA + S-adenosyl-L-methionine = N(1)-methylguanosine(37) in tRNA + S-adenosyl-L-homocysteine + H(+). Its function is as follows. Specifically methylates guanosine-37 in various tRNAs. The protein is tRNA (guanine-N(1)-)-methyltransferase of Coxiella burnetii (strain CbuK_Q154) (Coxiella burnetii (strain Q154)).